A 311-amino-acid polypeptide reads, in one-letter code: tRNA-cytidine(32) 2-sulfurtransferase (311 aa).

Residues 47 to 52 (SGGKDS) carry the PP-loop motif motif. Cys-122, Cys-125, and Cys-213 together coordinate [4Fe-4S] cluster.

Belongs to the TtcA family. In terms of assembly, homodimer. Mg(2+) serves as cofactor. It depends on [4Fe-4S] cluster as a cofactor.

The protein resides in the cytoplasm. It carries out the reaction cytidine(32) in tRNA + S-sulfanyl-L-cysteinyl-[cysteine desulfurase] + AH2 + ATP = 2-thiocytidine(32) in tRNA + L-cysteinyl-[cysteine desulfurase] + A + AMP + diphosphate + H(+). Its pathway is tRNA modification. Catalyzes the ATP-dependent 2-thiolation of cytidine in position 32 of tRNA, to form 2-thiocytidine (s(2)C32). The sulfur atoms are provided by the cysteine/cysteine desulfurase (IscS) system. This Klebsiella pneumoniae subsp. pneumoniae (strain ATCC 700721 / MGH 78578) protein is tRNA-cytidine(32) 2-sulfurtransferase.